Consider the following 525-residue polypeptide: CTP synthase (525 aa).

Residues 1 to 269 are amidoligase domain; it reads MKYIIVTGGV…ADAITTHLHL (269 aa). Serine 12 contributes to the CTP binding site. UTP is bound at residue serine 12. Residues 13-18 and aspartate 70 each bind ATP; that span reads GLGKGI. Positions 70 and 144 each coordinate Mg(2+). Residues 151–153, 190–195, and lysine 226 contribute to the CTP site; these read DIE and KTKPTQ. UTP contacts are provided by residues 190-195 and lysine 226; that span reads KTKPTQ. The region spanning 292 to 524 is the Glutamine amidotransferase type-1 domain; the sequence is VAIVSKYGIE…VSACRKNKKT (233 aa). Position 348 (glycine 348) interacts with L-glutamine. Catalysis depends on cysteine 375, which acts as the Nucleophile; for glutamine hydrolysis. L-glutamine-binding positions include 376–379, glutamate 399, and arginine 454; that span reads LGFQ. Catalysis depends on residues histidine 497 and glutamate 499.

It belongs to the CTP synthase family. Homotetramer.

It carries out the reaction UTP + L-glutamine + ATP + H2O = CTP + L-glutamate + ADP + phosphate + 2 H(+). The catalysed reaction is L-glutamine + H2O = L-glutamate + NH4(+). It catalyses the reaction UTP + NH4(+) + ATP = CTP + ADP + phosphate + 2 H(+). The protein operates within pyrimidine metabolism; CTP biosynthesis via de novo pathway; CTP from UDP: step 2/2. Allosterically activated by GTP, when glutamine is the substrate; GTP has no effect on the reaction when ammonia is the substrate. The allosteric effector GTP functions by stabilizing the protein conformation that binds the tetrahedral intermediate(s) formed during glutamine hydrolysis. Inhibited by the product CTP, via allosteric rather than competitive inhibition. Its function is as follows. Catalyzes the ATP-dependent amination of UTP to CTP with either L-glutamine or ammonia as the source of nitrogen. Regulates intracellular CTP levels through interactions with the four ribonucleotide triphosphates. The polypeptide is CTP synthase (Methanosphaerula palustris (strain ATCC BAA-1556 / DSM 19958 / E1-9c)).